We begin with the raw amino-acid sequence, 91 residues long: uncharacterized protein (91 aa).

The N-terminal stretch at 1-21 (MKQLLASPSLQLVTYPASATA) is a signal peptide.

This sequence belongs to the BhsA/McbA family.

It is found in the periplasm. This is an uncharacterized protein from Escherichia coli O157:H7.